We begin with the raw amino-acid sequence, 2175 residues long: Homeobox protein cut (2175 aa).

Disordered stretches follow at residues 139 to 170 and 249 to 432; these read NLLA…QQSG and GNVK…GQPA. Low complexity-rich tracts occupy residues 153 to 169 and 249 to 268; these read LLSA…LQQS and GNVK…SNNS. The stretch at 265 to 343 forms a coiled coil; the sequence is SNNSHQDEEE…ENKDAGEASL (79 aa). Over residues 271 to 294 the composition is skewed to acidic residues; the sequence is DEEELDDEEEDEEEDEDEDDEEEN. Over residues 309–320 the composition is skewed to polar residues; sequence QQETRTEPSATT. Residues 344-359 are compositionally biased toward low complexity; sequence NVSNNHNTTDSNNSCS. The span at 360–374 shows a compositional bias: polar residues; the sequence is RKNNNGGNESEQHVA. A compositionally biased stretch (low complexity) spans 384–415; it reads NNNTNTSNNNNTSNTATSNTNNNNNNNSSSGN. A coiled-coil region spans residues 433 to 499; the sequence is VLLAAKDKEI…NEALAEATAL (67 aa). Residues 503 to 515 are compositionally biased toward low complexity; that stretch reads ASTNNNNNSQSSD. Disordered stretches follow at residues 503 to 600 and 656 to 765; these read ASTN…KIKK and ASDA…NTNA. Over residues 546-568 the composition is skewed to acidic residues; it reads AEDDEEDEDQAMLVDSEEAEDKP. Over residues 673-696 the composition is skewed to basic residues; the sequence is QQQHQHQQQHHQQQHLHQQHHHHL. The segment covering 697-710 has biased composition (low complexity); sequence QQQPNSGSNSNPAS. Over residues 714–735 the composition is skewed to basic residues; that stretch reads HHGHHLHGHGLLHPSSAHHLHH. Over residues 738-765 the composition is skewed to low complexity; the sequence is TESNSNSSTPTAAGNNNGSNNSSSNTNA. Positions 877–964 form a DNA-binding region, CUT 1; the sequence is NMDKYANQAL…VMLLKSLIPK (88 aa). Disordered stretches follow at residues 1001–1083 and 1197–1289; these read LMKQ…HDDQ and QRSS…EFAA. 2 stretches are compositionally biased toward basic and acidic residues: residues 1009–1030 and 1062–1083; these read QHRE…EDSK and QRER…HDDQ. The stretch at 1056–1161 forms a coiled coil; the sequence is EQAAAQQRER…QQQAAQAQAQ (106 aa). Positions 1249–1282 are enriched in low complexity; it reads GAPPTAAPPTGGASSNSAAPSPLSNSILPPALSS. Positions 1330-1417 form a DNA-binding region, CUT 2; sequence QQQFDMFNNL…VHKLVASQYK (88 aa). Residues 1463–1522 are a coiled coil; sequence AQAQHLMQQMQAAAMSAAMQQQQVAQAQQQAQQAQQAQQHLQQQAQQHLQQQQHLAQQQH. Residues 1507-1540 are compositionally biased toward low complexity; the sequence is AQQHLQQQQHLAQQQHPHQQHHQAAAAAAALHHQ. 6 disordered regions span residues 1507–1588, 1695–1747, 1803–1826, 1922–1955, 2069–2097, and 2113–2175; these read AQQH…PMLM, ERRE…PSKK, QVPH…ATPF, RSDD…DKTT, KQEE…QKLK, and SSTG…GWNY. Over residues 1564-1573 the composition is skewed to gly residues; it reads AQPGGPGGNQ. Positions 1608 to 1695 form a DNA-binding region, CUT 3; that stretch reads YEMAALTQDL…VERLQLLKNE (88 aa). The span at 1709-1732 shows a compositional bias: low complexity; sequence NQQDNSSDTSSNDTNDFYTSSPGP. The segment at residues 1745–1804 is a DNA-binding region (homeobox); the sequence is SKKQRVLFSEEQKEALRLAFALDPYPNVGTIEFLANELGLATRTITNWFHNHRMRLKQQV. Residues serine 1940 and serine 1944 each carry the phosphoserine modification. A compositionally biased stretch (pro residues) spans 2126–2135; it reads PLAPPPPPPA. Low complexity predominate over residues 2136-2175; that stretch reads ASSSIVSGESTTSSSSSSNTSSSTPAVTTAAATAAAGWNY.

It belongs to the CUT homeobox family. In terms of tissue distribution, detected in many cells in the central nervous system, all external sensory organs, some peripheral neurons, and in the non-neural cells of the spiracles and the Malpighian tubules.

Its subcellular location is the nucleus. Its function is as follows. Regulator of cell fate decisions in multiple lineages. Specifically, functions as a determination factor that specifies sensory organ identity in precursor cells. Probably also involved in cell type specification of Malpighian tubules. In absence of cut gene external sensory organs are transformed into chordotonal organs. This chain is Homeobox protein cut (ct), found in Drosophila melanogaster (Fruit fly).